Reading from the N-terminus, the 84-residue chain is GTP cyclohydrolase 1 feedback regulatory protein (84 aa).

It belongs to the GFRP family. Homopentamer. Forms a complex with GCH1 where a GCH1 homodecamer is sandwiched by two GFRP homopentamers.

The protein localises to the nucleus. The protein resides in the nucleus membrane. It localises to the cytoplasm. Its subcellular location is the cytosol. Functionally, mediates tetrahydrobiopterin inhibition of GTP cyclohydrolase 1. The chain is GTP cyclohydrolase 1 feedback regulatory protein (gchfr) from Xenopus laevis (African clawed frog).